Here is a 233-residue protein sequence, read N- to C-terminus: Large ribosomal subunit protein uL1 (233 aa).

Belongs to the universal ribosomal protein uL1 family. As to quaternary structure, part of the 50S ribosomal subunit.

Binds directly to 23S rRNA. The L1 stalk is quite mobile in the ribosome, and is involved in E site tRNA release. In terms of biological role, protein L1 is also a translational repressor protein, it controls the translation of the L11 operon by binding to its mRNA. The protein is Large ribosomal subunit protein uL1 of Aeromonas hydrophila subsp. hydrophila (strain ATCC 7966 / DSM 30187 / BCRC 13018 / CCUG 14551 / JCM 1027 / KCTC 2358 / NCIMB 9240 / NCTC 8049).